The following is a 122-amino-acid chain: Basic phospholipase A2 F16 (122 aa).

Cystine bridges form between Cys-26–Cys-115, Cys-28–Cys-44, Cys-43–Cys-95, Cys-49–Cys-122, Cys-50–Cys-88, Cys-57–Cys-81, and Cys-75–Cys-86. Tyr-27, Gly-29, and Gly-31 together coordinate Ca(2+). His-47 is a catalytic residue. Residue Asp-48 participates in Ca(2+) binding. The active site involves Asp-89.

This sequence belongs to the phospholipase A2 family. Group II subfamily. D49 sub-subfamily. Requires Ca(2+) as cofactor. In terms of tissue distribution, expressed by the venom gland.

The protein resides in the secreted. The catalysed reaction is a 1,2-diacyl-sn-glycero-3-phosphocholine + H2O = a 1-acyl-sn-glycero-3-phosphocholine + a fatty acid + H(+). Pre-incubation with heparin markedly reduces the neurotoxicity of this toxin. Snake venom phospholipase A2 (PLA2) that produces neuromuscular blockade in chick biventer cervicis preparations in the absence and presence of crotapotin. In contrast, in mouse phrenic nerve-diaphragm preparations, the neuromuscular blockade is dependent on crotapotin. PLA2 catalyzes the calcium-dependent hydrolysis of the 2-acyl groups in 3-sn-phosphoglycerides. In Crotalus durissus terrificus (South American rattlesnake), this protein is Basic phospholipase A2 F16.